Consider the following 210-residue polypeptide: Protein GrpE (210 aa).

Residues 1–12 show a composition bias toward basic and acidic residues; the sequence is MSDQAKDERAPS. 2 disordered regions span residues 1 to 26 and 191 to 210; these read MSDQAKDERAPSEAEAAEANAERTEG and IAAEAPVEPGPVNEQAEKDA.

Belongs to the GrpE family. As to quaternary structure, homodimer.

The protein resides in the cytoplasm. Participates actively in the response to hyperosmotic and heat shock by preventing the aggregation of stress-denatured proteins, in association with DnaK and GrpE. It is the nucleotide exchange factor for DnaK and may function as a thermosensor. Unfolded proteins bind initially to DnaJ; upon interaction with the DnaJ-bound protein, DnaK hydrolyzes its bound ATP, resulting in the formation of a stable complex. GrpE releases ADP from DnaK; ATP binding to DnaK triggers the release of the substrate protein, thus completing the reaction cycle. Several rounds of ATP-dependent interactions between DnaJ, DnaK and GrpE are required for fully efficient folding. The chain is Protein GrpE from Mesorhizobium japonicum (strain LMG 29417 / CECT 9101 / MAFF 303099) (Mesorhizobium loti (strain MAFF 303099)).